The following is a 453-amino-acid chain: Adenylyltransferase and sulfurtransferase MOCS3 (453 aa).

Position 62 is a phosphothreonine (Thr62). ATP-binding positions include Gly101, Asp122, 129 to 133 (SNFHR), Lys146, and 190 to 191 (DN). 2 residues coordinate Zn(2+): Cys231 and Cys234. Residue Cys248 is the Glycyl thioester intermediate; for adenylyltransferase activity of the active site. Zn(2+) is bound by residues Cys306 and Cys309. A Rhodanese domain is found at 355 to 451 (QAQPHLLIDV…WTNSVDPSFP (97 aa)). The Cysteine persulfide intermediate; for sulfurtransferase activity role is filled by Cys410.

The protein in the N-terminal section; belongs to the HesA/MoeB/ThiF family. UBA4 subfamily. The cofactor is Zn(2+).

It localises to the cytoplasm. Its subcellular location is the cytosol. It carries out the reaction [molybdopterin-synthase sulfur-carrier protein]-C-terminal Gly-Gly + ATP + H(+) = [molybdopterin-synthase sulfur-carrier protein]-C-terminal Gly-Gly-AMP + diphosphate. It catalyses the reaction [molybdopterin-synthase sulfur-carrier protein]-C-terminal Gly-Gly-AMP + S-sulfanyl-L-cysteinyl-[cysteine desulfurase] + AH2 = [molybdopterin-synthase sulfur-carrier protein]-C-terminal-Gly-aminoethanethioate + L-cysteinyl-[cysteine desulfurase] + A + AMP + 2 H(+). Its pathway is tRNA modification; 5-methoxycarbonylmethyl-2-thiouridine-tRNA biosynthesis. It participates in cofactor biosynthesis; molybdopterin biosynthesis. Functionally, plays a central role in 2-thiolation of mcm(5)S(2)U at tRNA wobble positions of cytosolic tRNA(Lys), tRNA(Glu) and tRNA(Gln). Also essential during biosynthesis of the molybdenum cofactor. Acts by mediating the C-terminal thiocarboxylation of sulfur carriers URM1 and MOCS2A. Its N-terminus first activates URM1 and MOCS2A as acyl-adenylates (-COAMP), then the persulfide sulfur on the catalytic cysteine is transferred to URM1 and MOCS2A to form thiocarboxylation (-COSH) of their C-terminus. The reaction probably involves hydrogen sulfide that is generated from the persulfide intermediate and that acts as a nucleophile towards URM1 and MOCS2A. Subsequently, a transient disulfide bond is formed. Does not use thiosulfate as sulfur donor; NFS1 probably acting as a sulfur donor for thiocarboxylation reactions. The polypeptide is Adenylyltransferase and sulfurtransferase MOCS3 (Drosophila yakuba (Fruit fly)).